Reading from the N-terminus, the 400-residue chain is 3-phenylpropionate/cinnamic acid dioxygenase ferredoxin--NAD(+) reductase component (400 aa).

5–36 (TIIIVGGGQAAAMAAASLRQQGFTGELHLFSD) is a binding site for FAD. Residue 146–174 (SVVIVGAGTIGLELAASATQRGCKATVIE) participates in NAD(+) binding.

Belongs to the bacterial ring-hydroxylating dioxygenase ferredoxin reductase family. As to quaternary structure, this dioxygenase system consists of four proteins: the two subunits of the hydroxylase component (HcaE and HcaF), a ferredoxin (HcaC) and a ferredoxin reductase (HcaD). The cofactor is FAD.

It catalyses the reaction 2 reduced [2Fe-2S]-[ferredoxin] + NAD(+) + H(+) = 2 oxidized [2Fe-2S]-[ferredoxin] + NADH. It participates in aromatic compound metabolism; 3-phenylpropanoate degradation. In terms of biological role, part of the multicomponent 3-phenylpropionate dioxygenase, that converts 3-phenylpropionic acid (PP) and cinnamic acid (CI) into 3-phenylpropionate-dihydrodiol (PP-dihydrodiol) and cinnamic acid-dihydrodiol (CI-dihydrodiol), respectively. This Escherichia coli O7:K1 (strain IAI39 / ExPEC) protein is 3-phenylpropionate/cinnamic acid dioxygenase ferredoxin--NAD(+) reductase component.